Consider the following 1361-residue polypeptide: DNA-directed RNA polymerase subunit beta (1361 aa).

It belongs to the RNA polymerase beta chain family. As to quaternary structure, the RNAP catalytic core consists of 2 alpha, 1 beta, 1 beta' and 1 omega subunit. When a sigma factor is associated with the core the holoenzyme is formed, which can initiate transcription.

It carries out the reaction RNA(n) + a ribonucleoside 5'-triphosphate = RNA(n+1) + diphosphate. Its function is as follows. DNA-dependent RNA polymerase catalyzes the transcription of DNA into RNA using the four ribonucleoside triphosphates as substrates. This is DNA-directed RNA polymerase subunit beta from Saccharophagus degradans (strain 2-40 / ATCC 43961 / DSM 17024).